The primary structure comprises 146 residues: Anti-sigma F factor (146 aa).

The protein belongs to the anti-sigma-factor family.

It catalyses the reaction L-seryl-[protein] + ATP = O-phospho-L-seryl-[protein] + ADP + H(+). The enzyme catalyses L-threonyl-[protein] + ATP = O-phospho-L-threonyl-[protein] + ADP + H(+). Its function is as follows. Binds to sigma F and blocks its ability to form an RNA polymerase holoenzyme (E-sigma F). Phosphorylates SpoIIAA on a serine residue. This phosphorylation may enable SpoIIAA to act as an anti-anti-sigma factor that counteracts SpoIIAB and thus releases sigma F from inhibition. The protein is Anti-sigma F factor of Shouchella clausii (strain KSM-K16) (Alkalihalobacillus clausii).